The sequence spans 124 residues: Ribonuclease pancreatic (124 aa).

Basic and acidic residues predominate over residues 1–13 (SETAAEKFERQHM). The tract at residues 1–23 (SETAAEKFERQHMDSYSSSSSNS) is disordered. 2 residues coordinate substrate: Lys7 and Arg10. His12 functions as the Proton acceptor in the catalytic mechanism. Cystine bridges form between Cys26–Cys84, Cys40–Cys95, Cys58–Cys110, and Cys65–Cys72. Substrate contacts are provided by residues 41–45 (KPVNT), Lys66, and Arg85. The active-site Proton donor is the His119.

Belongs to the pancreatic ribonuclease family. As to quaternary structure, monomer. Interacts with and forms tight 1:1 complexes with RNH1. Dimerization of two such complexes may occur. Interaction with RNH1 inhibits this protein. As to expression, pancreas.

Its subcellular location is the secreted. It catalyses the reaction an [RNA] containing cytidine + H2O = an [RNA]-3'-cytidine-3'-phosphate + a 5'-hydroxy-ribonucleotide-3'-[RNA].. The enzyme catalyses an [RNA] containing uridine + H2O = an [RNA]-3'-uridine-3'-phosphate + a 5'-hydroxy-ribonucleotide-3'-[RNA].. Its function is as follows. Endonuclease that catalyzes the cleavage of RNA on the 3' side of pyrimidine nucleotides. Acts on single-stranded and double-stranded RNA. This is Ribonuclease pancreatic (RNASE1) from Camelus bactrianus (Bactrian camel).